We begin with the raw amino-acid sequence, 216 residues long: Protein Syd (216 aa).

Belongs to the Syd family.

It localises to the cell inner membrane. Its function is as follows. Interacts with the SecY protein in vivo. May bind preferentially to an uncomplexed state of SecY, thus functioning either as a chelating agent for excess SecY in the cell or as a regulatory factor that negatively controls the translocase function. This is Protein Syd from Shewanella baltica (strain OS155 / ATCC BAA-1091).